Here is a 269-residue protein sequence, read N- to C-terminus: 3-methyl-2-oxobutanoate hydroxymethyltransferase (269 aa).

Mg(2+) is bound by residues aspartate 50 and aspartate 89. 3-methyl-2-oxobutanoate-binding positions include 50–51 (DS), aspartate 89, and lysine 119. Glutamate 121 serves as a coordination point for Mg(2+). The active-site Proton acceptor is glutamate 187.

This sequence belongs to the PanB family. As to quaternary structure, homodecamer; pentamer of dimers. Requires Mg(2+) as cofactor.

The protein localises to the cytoplasm. The enzyme catalyses 3-methyl-2-oxobutanoate + (6R)-5,10-methylene-5,6,7,8-tetrahydrofolate + H2O = 2-dehydropantoate + (6S)-5,6,7,8-tetrahydrofolate. The protein operates within cofactor biosynthesis; (R)-pantothenate biosynthesis; (R)-pantoate from 3-methyl-2-oxobutanoate: step 1/2. In terms of biological role, catalyzes the reversible reaction in which hydroxymethyl group from 5,10-methylenetetrahydrofolate is transferred onto alpha-ketoisovalerate to form ketopantoate. This is 3-methyl-2-oxobutanoate hydroxymethyltransferase from Corynebacterium efficiens (strain DSM 44549 / YS-314 / AJ 12310 / JCM 11189 / NBRC 100395).